We begin with the raw amino-acid sequence, 396 residues long: uncharacterized protein (396 aa).

Residue Lys219 is modified to N6-(pyridoxal phosphate)lysine.

This sequence belongs to the class-V pyridoxal-phosphate-dependent aminotransferase family. The cofactor is pyridoxal 5'-phosphate.

It localises to the cytoplasm. It is found in the nucleus. This is an uncharacterized protein from Schizosaccharomyces pombe (strain 972 / ATCC 24843) (Fission yeast).